A 133-amino-acid polypeptide reads, in one-letter code: MTYNEKIISMNNDLLDHQHKELFEISKKLSLMNQRHVGTKELKIVLRELLIMINRHFSDEEAFMREIGYPYINHHTRIHRKIILEIEEIIISEAKFVNIMTEKLNLVVQDFIFKHTAKEDSKIVKYYEEKFKK.

The Fe cation site is built by His-19, His-56, Glu-60, His-75, His-79, His-115, and Asp-120.

The protein belongs to the hemerythrin family. Monomer.

In terms of biological role, oxygen-binding protein. May be involved in a storage mechanism or for delivery to oxygen-requiring enzymes. The oxygen-binding site contains two iron atoms. The polypeptide is Bacteriohemerythrin (Campylobacter jejuni subsp. jejuni serotype O:23/36 (strain 81-176)).